A 417-amino-acid polypeptide reads, in one-letter code: Gamma-glutamyl phosphate reductase (417 aa).

The protein belongs to the gamma-glutamyl phosphate reductase family.

The protein resides in the cytoplasm. The enzyme catalyses L-glutamate 5-semialdehyde + phosphate + NADP(+) = L-glutamyl 5-phosphate + NADPH + H(+). It participates in amino-acid biosynthesis; L-proline biosynthesis; L-glutamate 5-semialdehyde from L-glutamate: step 2/2. Functionally, catalyzes the NADPH-dependent reduction of L-glutamate 5-phosphate into L-glutamate 5-semialdehyde and phosphate. The product spontaneously undergoes cyclization to form 1-pyrroline-5-carboxylate. In Escherichia coli (strain K12 / MC4100 / BW2952), this protein is Gamma-glutamyl phosphate reductase.